A 1280-amino-acid chain; its full sequence is Clustered mitochondria protein homolog (1280 aa).

The segment covering 1–27 (MAASSNDASKSAMANSNVTTEVAQTPS) has biased composition (polar residues). 2 disordered regions span residues 1–49 (MAAS…GQLP) and 169–189 (GLDQSGKPKEDGPEQSPLADY). Acidic residues predominate over residues 32–43 (VNGEVEATEEDG). Positions 338–582 (DLARTQESYL…RLTPLDVAWI (245 aa)) constitute a Clu domain. 3 disordered regions span residues 633–669 (KANKARGGRRRLPKAQKKADAGKEVDGEKKAEAEPEQ), 905–943 (GAAVPTPAAPQTNGSSTSSKKKKNKTITPPRADSPAVSL), and 1214–1280 (TGRN…TQKP). Residues 635–648 (NKARGGRRRLPKAQ) show a composition bias toward basic residues. The segment covering 649–669 (KKADAGKEVDGEKKAEAEPEQ) has biased composition (basic and acidic residues). The segment covering 1221–1235 (PAAATPSVSDAAAAA) has biased composition (low complexity). The segment covering 1245–1261 (VDQRKIEDLLKYIEGES) has biased composition (basic and acidic residues). Basic residues predominate over residues 1265-1280 (PTKKRTQNPRKRTQKP).

It belongs to the CLU family. As to quaternary structure, may associate with the eukaryotic translation initiation factor 3 (eIF-3) complex.

The protein localises to the cytoplasm. Its function is as follows. mRNA-binding protein involved in proper cytoplasmic distribution of mitochondria. In Phaeosphaeria nodorum (strain SN15 / ATCC MYA-4574 / FGSC 10173) (Glume blotch fungus), this protein is Clustered mitochondria protein homolog.